An 897-amino-acid polypeptide reads, in one-letter code: DNA polymerase I (897 aa).

The 5'-3' exonuclease domain maps to 1–317 (MEQPVIKEGT…ILDNTPALDN (317 aa)). The region spanning 318–494 (APKKSRMIVL…RLCEYFEKGG (177 aa)) is the 3'-5' exonuclease domain. The polymerase stretch occupies residues 498–896 (DLLTLARDIE…FIAKRWNELK (399 aa)).

Belongs to the DNA polymerase type-A family. Single-chain monomer with multiple functions.

It carries out the reaction DNA(n) + a 2'-deoxyribonucleoside 5'-triphosphate = DNA(n+1) + diphosphate. In addition to polymerase activity, this DNA polymerase exhibits 3'-5' and 5'-3' exonuclease activity. In Helicobacter pylori (strain J99 / ATCC 700824) (Campylobacter pylori J99), this protein is DNA polymerase I (polA).